A 339-amino-acid chain; its full sequence is Fructose-1,6-bisphosphatase class 1 (339 aa).

4 residues coordinate Mg(2+): E92, D114, L116, and D117. Residues 117 to 120, N213, and K279 each bind substrate; that span reads DGSS. Residue E285 participates in Mg(2+) binding.

It belongs to the FBPase class 1 family. Homotetramer. Mg(2+) is required as a cofactor.

It is found in the cytoplasm. It carries out the reaction beta-D-fructose 1,6-bisphosphate + H2O = beta-D-fructose 6-phosphate + phosphate. It participates in carbohydrate biosynthesis; gluconeogenesis. This is Fructose-1,6-bisphosphatase class 1 from Acidovorax sp. (strain JS42).